The following is a 154-amino-acid chain: Transcriptional repressor NrdR (154 aa).

The segment at 1–22 (MECPNCHKNASRVIDSRPSDEN) is disordered. Residues 3 to 34 (CPNCHKNASRVIDSRPSDENRAIRRRRECENC) fold into a zinc finger. Positions 49–139 (LLVIKNDGTR…IYRQFKDVSG (91 aa)) constitute an ATP-cone domain.

It belongs to the NrdR family. Zn(2+) serves as cofactor.

Its function is as follows. Negatively regulates transcription of bacterial ribonucleotide reductase nrd genes and operons by binding to NrdR-boxes. The chain is Transcriptional repressor NrdR from Lactobacillus gasseri (strain ATCC 33323 / DSM 20243 / BCRC 14619 / CIP 102991 / JCM 1131 / KCTC 3163 / NCIMB 11718 / NCTC 13722 / AM63).